A 212-amino-acid chain; its full sequence is Thymidine kinase (212 aa).

Residues 11-18, 43-45, and 86-89 each bind ATP; these read SPMNAGKT, DTR, and DEAQ. The Proton acceptor role is filled by Glu-87. Phe-119 lines the substrate pocket. Residues Cys-144, Cys-147, Cys-183, and Cys-186 each contribute to the Zn(2+) site.

Belongs to the thymidine kinase family.

It carries out the reaction thymidine + ATP = dTMP + ADP + H(+). This Encephalitozoon cuniculi (strain GB-M1) (Microsporidian parasite) protein is Thymidine kinase (TK).